Reading from the N-terminus, the 912-residue chain is Probable transmembrane GTPase FZO-like, chloroplastic (912 aa).

Residues 1 to 54 (MRTLISHRQCVTSPFLISAASPPFPGRCFKLSSFTPPRHRRFSSLSIRNISHES) constitute a chloroplast transit peptide. The disordered stretch occupies residues 51–71 (SHESADQTSSSRPRTLYPGGY). At 55–773 (ADQTSSSRPR…SKRLEQDIRE (719 aa)) the chain is on the stromal side. Residues 359-364 (NSGKST) and Ser521 contribute to the GTP site. Residues 774–794 (VFFVTVGGLGAAGLSASLLTS) traverse the membrane as a helical segment. The Chloroplast intermembrane segment spans residues 795–801 (VLPTTLE). A helical transmembrane segment spans residues 802–822 (DLLALGLCSAGGYVAIANFPY). Residues 823–912 (RRQAIIGKVN…LHVSRDEMRL (90 aa)) are Stromal-facing. The stretch at 877–904 (DRLLGIQKELSDIRSKLQLLQVDIDNLH) forms a coiled coil.

Belongs to the TRAFAC class dynamin-like GTPase superfamily. Dynamin/Fzo/YdjA family. Mitofusin subfamily.

The protein localises to the plastid. The protein resides in the chloroplast inner membrane. Its subcellular location is the chloroplast thylakoid membrane. Probable membrane-remodeling GTPase that plays a unique role in the in the determination of thylakoid and chloroplast morphology and regulates organization of the thylakoid network. Not involved in the determination of mitochondrial morphology or ultrastructure. The sequence is that of Probable transmembrane GTPase FZO-like, chloroplastic from Arabidopsis thaliana (Mouse-ear cress).